The sequence spans 171 residues: Large ribosomal subunit protein bL9 (171 aa).

It belongs to the bacterial ribosomal protein bL9 family.

Its function is as follows. Binds to the 23S rRNA. In Rickettsia canadensis (strain McKiel), this protein is Large ribosomal subunit protein bL9.